The following is a 1370-amino-acid chain: DNA-directed RNA polymerase subunit beta (1370 aa).

Belongs to the RNA polymerase beta chain family. As to quaternary structure, the RNAP catalytic core consists of 2 alpha, 1 beta, 1 beta' and 1 omega subunit. When a sigma factor is associated with the core the holoenzyme is formed, which can initiate transcription.

The enzyme catalyses RNA(n) + a ribonucleoside 5'-triphosphate = RNA(n+1) + diphosphate. DNA-dependent RNA polymerase catalyzes the transcription of DNA into RNA using the four ribonucleoside triphosphates as substrates. This chain is DNA-directed RNA polymerase subunit beta, found in Syntrophobacter fumaroxidans (strain DSM 10017 / MPOB).